We begin with the raw amino-acid sequence, 249 residues long: Ubiquinone biosynthesis O-methyltransferase (249 aa).

The disordered stretch occupies residues 1-23 (MTSPSQVLPASAGKPTGPNADPK). S-adenosyl-L-methionine is bound by residues arginine 52, glycine 71, aspartate 92, and methionine 136.

This sequence belongs to the methyltransferase superfamily. UbiG/COQ3 family.

The enzyme catalyses a 3-demethylubiquinol + S-adenosyl-L-methionine = a ubiquinol + S-adenosyl-L-homocysteine + H(+). It catalyses the reaction a 3-(all-trans-polyprenyl)benzene-1,2-diol + S-adenosyl-L-methionine = a 2-methoxy-6-(all-trans-polyprenyl)phenol + S-adenosyl-L-homocysteine + H(+). The protein operates within cofactor biosynthesis; ubiquinone biosynthesis. In terms of biological role, O-methyltransferase that catalyzes the 2 O-methylation steps in the ubiquinone biosynthetic pathway. The polypeptide is Ubiquinone biosynthesis O-methyltransferase (Cupriavidus pinatubonensis (strain JMP 134 / LMG 1197) (Cupriavidus necator (strain JMP 134))).